The following is a 1085-amino-acid chain: Solute carrier family 12 member 4 (1085 aa).

Residues 1–119 (MPHFTVVPVD…RRAAKAPSMG (119 aa)) lie on the Cytoplasmic side of the membrane. Residues serine 24, serine 47, serine 81, and serine 88 each carry the phosphoserine modification. The discontinuously helical transmembrane segment at 120–141 (TLMGVYLPCLQNIFGVILFLRL) threads the bilayer. K(+) contacts are provided by asparagine 131 and isoleucine 132. At 142 to 149 (TWMVGTAG) the chain is on the extracellular side. Residues 150 to 172 (VLQALLIVLICCCCTLLTAISMS) traverse the membrane as a helical segment. At 173–196 (AIATNGVVPAGGSYFMISRSLGPE) the chain is on the cytoplasmic side. Residues 197–225 (FGGAVGLCFYLGTTFAAAMYILGAIEILL) form a helical membrane-spanning segment. Tyrosine 216 serves as a coordination point for K(+). The Extracellular segment spans residues 226-248 (TYIAPPAAIFYPSGTHDMSSATL). A run of 2 helical transmembrane segments spans residues 249–271 (NNMR…VGVK) and 272–297 (YVNK…GGIK). Over 298–419 (SIFDPPVFPV…LYVVADIATS (122 aa)) the chain is Extracellular. A disulfide bridge links cysteine 308 with cysteine 323. N-linked (GlcNAc...) asparagine glycans are attached at residues asparagine 312, asparagine 331, and asparagine 347. Cysteines 343 and 353 form a disulfide. Residues 420 to 440 (FTVLVGIFFPSVTGIMAGSNR) traverse the membrane as a helical segment. Proline 429 and threonine 432 together coordinate K(+). 3 residues coordinate chloride: glycine 433, isoleucine 434, and methionine 435. The Cytoplasmic portion of the chain corresponds to 441–450 (SGDLRDAQKS). The chain crosses the membrane as a helical span at residues 451 to 473 (IPVGTILAIVTTSLVYFSSVILF). At 474-504 (GACIEGVVLRDKYGDGVSRNLVVGTLAWPSP) the chain is on the extracellular side. A helical membrane pass occupies residues 505-531 (WVIVVGSFFSTCGAGLQSLTGAPRLLQ). Over 532–554 (AIAKDNIIPFLRVFGHGKANGEP) the chain is Cytoplasmic. The next 2 helical transmembrane spans lie at 555 to 575 (TWAL…ASLD) and 576 to 598 (MVAP…ACAV). Residue tyrosine 589 coordinates chloride. The Cytoplasmic segment spans residues 599 to 612 (QTLLRTPNWRPRFK). 2 helical membrane passes run 613–635 (YYHW…VSSW) and 636–651 (YYAL…IYKY). Over 652–1085 (IEYQGAEKEW…GGREVITIYS (434 aa)) the chain is Cytoplasmic. Residues 665–681 (IRGLSLSAARYALLRLE) form a scissor helix region. Positions 697, 699, 707, 708, and 730 each coordinate ATP. At serine 734 the chain carries Phosphoserine. ATP is bound by residues glycine 794, tryptophan 795, and tyrosine 797. A phosphoserine mark is found at serine 916 and serine 967. Phosphothreonine is present on threonine 983. A Phosphoserine modification is found at serine 1050.

This sequence belongs to the SLC12A transporter family. K/Cl co-transporter subfamily. As to quaternary structure, homodimer; adopts a domain-swap conformation at the scissor helices connecting the transmembrane domain and C-terminal domain. Heterodimer with other K-Cl cotransporters. Phosphorylated, phosphorylation may regulate transporter activity. As to expression, detected in embryo, adult heart, erythrocytes, brain, kidney, stomach, ovary, testis and liver.

The protein localises to the cell membrane. The catalysed reaction is K(+)(in) + chloride(in) = K(+)(out) + chloride(out). Its activity is regulated as follows. Inhibited by WNK3. In terms of biological role, mediates electroneutral potassium-chloride cotransport when activated by cell swelling. May contribute to cell volume homeostasis in single cells. May be involved in the regulation of basolateral Cl(-) exit in NaCl absorbing epithelia. The polypeptide is Solute carrier family 12 member 4 (Slc12a4) (Mus musculus (Mouse)).